The following is a 2387-amino-acid chain: Highly reducing polyketide synthase curS1 (2387 aa).

The region spanning 10–433 (DVPIAVVGLS…GTNGHVVLES (424 aa)) is the Ketosynthase family 3 (KS3) domain. Catalysis depends on for beta-ketoacyl synthase activity residues C182, H316, and H356. Positions 551–891 (FVFTGQGAQW…ELASELFLKG (341 aa)) are malonyl-CoA:ACP transacylase (MAT) domain. S641 functions as the For malonyltransferase activity in the catalytic mechanism. Residues 940–1075 (KSIIGAQVPM…GLITIDYAET (136 aa)) are N-terminal hotdog fold. Residues 940-1259 (KSIIGAQVPM…VSELENDSGE (320 aa)) form the PKS/mFAS DH domain. The interval 942-1256 (IIGAQVPMMD…DYRVSELEND (315 aa)) is dehydratase (DH) domain. The Proton acceptor; for dehydratase activity role is filled by H972. Residues 1103 to 1259 (SYTYSKEDFY…VSELENDSGE (157 aa)) are C-terminal hotdog fold. The Proton donor; for dehydratase activity role is filled by D1169. Positions 1673 to 1987 (GLMDTLTFIE…QGKHRGKLVL (315 aa)) are enoylreductase (ER) domain. The interval 2011–2191 (STYLFIGGLG…VAVDLGIMRD (181 aa)) is catalytic ketoreductase (KRc) domain. The region spanning 2302–2379 (EAVVIITDAL…VFAGKIAEKS (78 aa)) is the Carrier domain. S2339 bears the O-(pantetheine 4'-phosphoryl)serine mark.

It participates in mycotoxin biosynthesis. Its function is as follows. Highly reducing polyketide synthase; part of the gene cluster that mediates the biosynthesis of 10,11-dehydrocurvularin, a prevalent fungal phytotoxin with heat shock response and immune-modulatory activities. The highly reducing polyketide synthase curS1 is responsible for biosynthesis up to the tetraketide stage. The non-reducing polyketide synthase curS2 then conducts four additional chain extension cycles, producing the unreduced part of the nascent octaketide from C-1 to C-8 in 10,11-dehydrocurvularin. This Aspergillus terreus protein is Highly reducing polyketide synthase curS1.